Reading from the N-terminus, the 61-residue chain is Large ribosomal subunit protein uL30 (61 aa).

Belongs to the universal ribosomal protein uL30 family. Part of the 50S ribosomal subunit.

This chain is Large ribosomal subunit protein uL30, found in Latilactobacillus sakei subsp. sakei (strain 23K) (Lactobacillus sakei subsp. sakei).